A 237-amino-acid chain; its full sequence is Mediator of RNA polymerase II transcription subunit 20 (237 aa).

This sequence belongs to the Mediator complex subunit 20 family. Component of the Mediator complex.

The protein resides in the nucleus. In terms of biological role, component of the Mediator complex, a coactivator involved in the regulated transcription of nearly all RNA polymerase II-dependent genes. Mediator functions as a bridge to convey information from gene-specific regulatory proteins to the basal RNA polymerase II transcription machinery. Mediator is recruited to promoters by direct interactions with regulatory proteins and serves as a scaffold for the assembly of a functional preinitiation complex with RNA polymerase II and the general transcription factors. This chain is Mediator of RNA polymerase II transcription subunit 20 (SRB2), found in Scheffersomyces stipitis (strain ATCC 58785 / CBS 6054 / NBRC 10063 / NRRL Y-11545) (Yeast).